The chain runs to 132 residues: Small ribosomal subunit protein uS8 (132 aa).

The protein belongs to the universal ribosomal protein uS8 family. Part of the 30S ribosomal subunit. Contacts proteins S5 and S12.

In terms of biological role, one of the primary rRNA binding proteins, it binds directly to 16S rRNA central domain where it helps coordinate assembly of the platform of the 30S subunit. The chain is Small ribosomal subunit protein uS8 from Rhizobium etli (strain CIAT 652).